Consider the following 222-residue polypeptide: Small ribosomal subunit protein uS3 (222 aa).

Positions 39–108 constitute a KH type-2 domain; the sequence is IRKFIKKELF…NVLINIVEVK (70 aa).

The protein belongs to the universal ribosomal protein uS3 family. In terms of assembly, part of the 30S ribosomal subunit. Forms a tight complex with proteins S10 and S14.

Its function is as follows. Binds the lower part of the 30S subunit head. Binds mRNA in the 70S ribosome, positioning it for translation. The sequence is that of Small ribosomal subunit protein uS3 from Clostridium perfringens (strain ATCC 13124 / DSM 756 / JCM 1290 / NCIMB 6125 / NCTC 8237 / Type A).